A 266-amino-acid polypeptide reads, in one-letter code: Undecaprenyl-diphosphatase (266 aa).

The next 8 helical transmembrane spans lie at Met1–Ile21, Gln39–Phe59, Trp87–Ile107, Leu111–Ala131, Ala149–Ala169, Ala183–Val203, Ala218–Leu238, and Met246–Leu266.

Belongs to the UppP family.

It is found in the cell inner membrane. It catalyses the reaction di-trans,octa-cis-undecaprenyl diphosphate + H2O = di-trans,octa-cis-undecaprenyl phosphate + phosphate + H(+). Its function is as follows. Catalyzes the dephosphorylation of undecaprenyl diphosphate (UPP). Confers resistance to bacitracin. The chain is Undecaprenyl-diphosphatase from Shewanella putrefaciens (strain CN-32 / ATCC BAA-453).